The chain runs to 365 residues: Quinone oxidoreductase-like protein 2 homolog (365 aa).

This sequence belongs to the zinc-containing alcohol dehydrogenase family. Quinone oxidoreductase subfamily.

This chain is Quinone oxidoreductase-like protein 2 homolog, found in Nematostella vectensis (Starlet sea anemone).